Here is a 97-residue protein sequence, read N- to C-terminus: Co-chaperonin GroES (97 aa).

It belongs to the GroES chaperonin family. Heptamer of 7 subunits arranged in a ring. Interacts with the chaperonin GroEL.

Its subcellular location is the cytoplasm. Together with the chaperonin GroEL, plays an essential role in assisting protein folding. The GroEL-GroES system forms a nano-cage that allows encapsulation of the non-native substrate proteins and provides a physical environment optimized to promote and accelerate protein folding. GroES binds to the apical surface of the GroEL ring, thereby capping the opening of the GroEL channel. In Gemmatimonas aurantiaca (strain DSM 14586 / JCM 11422 / NBRC 100505 / T-27), this protein is Co-chaperonin GroES.